Consider the following 172-residue polypeptide: Small ribosomal subunit protein uS5 (172 aa).

An S5 DRBM domain is found at 16–79 (LKDRLVAINR…ESAKKNLTRV (64 aa)).

It belongs to the universal ribosomal protein uS5 family. Part of the 30S ribosomal subunit. Contacts proteins S4 and S8.

With S4 and S12 plays an important role in translational accuracy. In terms of biological role, located at the back of the 30S subunit body where it stabilizes the conformation of the head with respect to the body. This chain is Small ribosomal subunit protein uS5, found in Bacteroides fragilis (strain ATCC 25285 / DSM 2151 / CCUG 4856 / JCM 11019 / LMG 10263 / NCTC 9343 / Onslow / VPI 2553 / EN-2).